We begin with the raw amino-acid sequence, 610 residues long: Myoneurin (610 aa).

The region spanning 24–89 (CDCTIVIGEF…IYTGTLNLDS (66 aa)) is the BTB domain. The tract at residues 169-197 (QGALAKKSSQTKKKKKAFNSPKTGQNKTV) is disordered. 2 consecutive short sequence motifs (nuclear localization signal) follow at residues 174–190 (KKSS…NSPK) and 257–262 (KRKRGK). Residues 188–197 (SPKTGQNKTV) are compositionally biased toward polar residues. Serine 289 is subject to Phosphoserine. C2H2-type zinc fingers lie at residues 302–324 (PMCN…MRIH), 330–352 (YVCH…VRTH), 358–381 (YKCE…RMHH), 387–409 (YKCD…ARKH), 415–437 (YVCD…VRRH), 443–465 (YVCD…SRKH), 471–493 (YICG…FRSH), and 499–522 (FICE…TKVH). The segment at 521 to 556 (VHSGADKTLDSSAEDHTLSEQDSIQKSPLSETMDVK) is disordered. Positions 523–539 (SGADKTLDSSAEDHTLS) are enriched in basic and acidic residues. Polar residues predominate over residues 540–550 (EQDSIQKSPLS).

It belongs to the krueppel C2H2-type zinc-finger protein family. As to expression, mainly expressed in the neuromuscular system. Located in and around synaptic myonuclei in adult muscle. Expression is dysregulated after nerve injury. Also found in the testis, ovary and placenta.

The protein localises to the nucleus. This is Myoneurin (MYNN) from Homo sapiens (Human).